The primary structure comprises 158 residues: 2-C-methyl-D-erythritol 2,4-cyclodiphosphate synthase (158 aa).

2 residues coordinate a divalent metal cation: Asp-9 and His-11. 4-CDP-2-C-methyl-D-erythritol 2-phosphate contacts are provided by residues 9-11 (DVH) and 35-36 (HS). His-43 contacts a divalent metal cation. 4-CDP-2-C-methyl-D-erythritol 2-phosphate is bound by residues 57 to 59 (DIG), 62 to 66 (FPDTD), 101 to 107 (AQKPKMA), 133 to 136 (TTTE), Phe-140, and Arg-143.

The protein belongs to the IspF family. Homotrimer. The cofactor is a divalent metal cation.

The catalysed reaction is 4-CDP-2-C-methyl-D-erythritol 2-phosphate = 2-C-methyl-D-erythritol 2,4-cyclic diphosphate + CMP. The protein operates within isoprenoid biosynthesis; isopentenyl diphosphate biosynthesis via DXP pathway; isopentenyl diphosphate from 1-deoxy-D-xylulose 5-phosphate: step 4/6. Its function is as follows. Involved in the biosynthesis of isopentenyl diphosphate (IPP) and dimethylallyl diphosphate (DMAPP), two major building blocks of isoprenoid compounds. Catalyzes the conversion of 4-diphosphocytidyl-2-C-methyl-D-erythritol 2-phosphate (CDP-ME2P) to 2-C-methyl-D-erythritol 2,4-cyclodiphosphate (ME-CPP) with a corresponding release of cytidine 5-monophosphate (CMP). The chain is 2-C-methyl-D-erythritol 2,4-cyclodiphosphate synthase from Bacillus velezensis (strain DSM 23117 / BGSC 10A6 / LMG 26770 / FZB42) (Bacillus amyloliquefaciens subsp. plantarum).